The primary structure comprises 333 residues: Potassium channel protein 1 (333 aa).

The Cytoplasmic portion of the chain corresponds to 1–6 (METYEK). Residues 7 to 27 (IELGIIVIILLILIESVILMT) traverse the membrane as a helical segment. The Extracellular portion of the chain corresponds to 28–60 (VEGWDFFTAFYTAVVTISTVGYGDYTPQTFLGK). A Selectivity filter motif is present at residues 46–51 (TVGYGD). A helical transmembrane segment spans residues 61–81 (LSVIIYIFAGVGAVAYTMGNI). Over 82–333 (ASFFIEGHFR…KLKRYVEGVE (252 aa)) the chain is Cytoplasmic. The RCK N-terminal domain maps to 107–229 (NNHYIICGYG…GADRAVCPYI (123 aa)). The region spanning 246–331 (EFIHSLVATE…LEKLKRYVEG (86 aa)) is the RCK C-terminal domain.

In terms of assembly, homotetramer.

The protein localises to the cell membrane. Its function is as follows. Potassium channel protein. Seems to conduct potassium at low membrane potentials. In Methanocaldococcus jannaschii (strain ATCC 43067 / DSM 2661 / JAL-1 / JCM 10045 / NBRC 100440) (Methanococcus jannaschii), this protein is Potassium channel protein 1.